The primary structure comprises 100 residues: Aspartyl/glutamyl-tRNA(Asn/Gln) amidotransferase subunit C (100 aa).

Belongs to the GatC family. Heterotrimer of A, B and C subunits.

The enzyme catalyses L-glutamyl-tRNA(Gln) + L-glutamine + ATP + H2O = L-glutaminyl-tRNA(Gln) + L-glutamate + ADP + phosphate + H(+). It catalyses the reaction L-aspartyl-tRNA(Asn) + L-glutamine + ATP + H2O = L-asparaginyl-tRNA(Asn) + L-glutamate + ADP + phosphate + 2 H(+). Functionally, allows the formation of correctly charged Asn-tRNA(Asn) or Gln-tRNA(Gln) through the transamidation of misacylated Asp-tRNA(Asn) or Glu-tRNA(Gln) in organisms which lack either or both of asparaginyl-tRNA or glutaminyl-tRNA synthetases. The reaction takes place in the presence of glutamine and ATP through an activated phospho-Asp-tRNA(Asn) or phospho-Glu-tRNA(Gln). The chain is Aspartyl/glutamyl-tRNA(Asn/Gln) amidotransferase subunit C from Streptococcus equi subsp. equi (strain 4047).